Here is a 241-residue protein sequence, read N- to C-terminus: Phycocyanobilin:ferredoxin oxidoreductase (241 aa).

Belongs to the HY2 family.

The enzyme catalyses (2R,3Z)-phycocyanobilin + 4 oxidized [2Fe-2S]-[ferredoxin] = biliverdin IXalpha + 4 reduced [2Fe-2S]-[ferredoxin] + 4 H(+). In terms of biological role, catalyzes the four-electron reduction of biliverdin IX-alpha (2-electron reduction at both the A and D rings); the reaction proceeds via an isolatable 2-electron intermediate, 181,182-dihydrobiliverdin. The chain is Phycocyanobilin:ferredoxin oxidoreductase from Prochlorococcus marinus (strain MIT 9515).